Reading from the N-terminus, the 158-residue chain is 6,7-dimethyl-8-ribityllumazine synthase (158 aa).

5-amino-6-(D-ribitylamino)uracil-binding positions include Phe-23, Ser-61–Glu-63, and Ala-85–Ile-87. Residue Glu-90–Thr-91 coordinates (2S)-2-hydroxy-3-oxobutyl phosphate. The active-site Proton donor is His-93. Residue Phe-118 coordinates 5-amino-6-(D-ribitylamino)uracil. Arg-132 provides a ligand contact to (2S)-2-hydroxy-3-oxobutyl phosphate.

The protein belongs to the DMRL synthase family.

It catalyses the reaction (2S)-2-hydroxy-3-oxobutyl phosphate + 5-amino-6-(D-ribitylamino)uracil = 6,7-dimethyl-8-(1-D-ribityl)lumazine + phosphate + 2 H2O + H(+). Its pathway is cofactor biosynthesis; riboflavin biosynthesis; riboflavin from 2-hydroxy-3-oxobutyl phosphate and 5-amino-6-(D-ribitylamino)uracil: step 1/2. Functionally, catalyzes the formation of 6,7-dimethyl-8-ribityllumazine by condensation of 5-amino-6-(D-ribitylamino)uracil with 3,4-dihydroxy-2-butanone 4-phosphate. This is the penultimate step in the biosynthesis of riboflavin. The protein is 6,7-dimethyl-8-ribityllumazine synthase of Prochlorococcus marinus subsp. pastoris (strain CCMP1986 / NIES-2087 / MED4).